The chain runs to 352 residues: tRNA-specific 2-thiouridylase MnmA (352 aa).

Residues Ala9–Ser16 and Met35 contribute to the ATP site. Cys96 (nucleophile) is an active-site residue. Cys96 and Cys192 are joined by a disulfide. Gly120 contacts ATP. The interval Lys142–Gln144 is interaction with tRNA. Cys192 (cysteine persulfide intermediate) is an active-site residue. The tract at residues Arg299 to Tyr300 is interaction with tRNA.

The protein belongs to the MnmA/TRMU family.

It localises to the cytoplasm. The catalysed reaction is S-sulfanyl-L-cysteinyl-[protein] + uridine(34) in tRNA + AH2 + ATP = 2-thiouridine(34) in tRNA + L-cysteinyl-[protein] + A + AMP + diphosphate + H(+). Functionally, catalyzes the 2-thiolation of uridine at the wobble position (U34) of tRNA, leading to the formation of s(2)U34. This is tRNA-specific 2-thiouridylase MnmA from Acidithiobacillus ferrooxidans (strain ATCC 23270 / DSM 14882 / CIP 104768 / NCIMB 8455) (Ferrobacillus ferrooxidans (strain ATCC 23270)).